Here is a 1179-residue protein sequence, read N- to C-terminus: Integrin alpha-7 (1179 aa).

Residues 1–33 (MARIPRCDFLRPPGIYYLITSLLAGLFLPPAIA) form the signal peptide. Residues 34–1076 (FNLDVMGAIR…YLDPMAVVVE (1043 aa)) lie on the Extracellular side of the membrane. FG-GAP repeat units follow at residues 38–103 (VMGA…ETDC), 110–175 (RGAN…IRDE), 185–238 (EGRP…SPDL), 292–349 (DRLT…ATRL), 350–411 (IPEV…HWAD), 412–467 (ISPL…GVVV), and 471–530 (QVLE…IDPR). Asn-86 carries N-linked (GlcNAc...) asparagine glycosylation. Disulfide bonds link Cys-94–Cys-103, Cys-140–Cys-163, and Cys-184–Cys-197. Residues Asp-372, Asn-374, Asp-376, Asp-380, Asp-434, Asn-436, Asp-438, Asp-442, Asp-492, Asp-494, Asn-496, Tyr-498, and Asp-500 each coordinate Ca(2+). Intrachain disulfides connect Cys-539–Cys-546, Cys-552–Cys-615, Cys-681–Cys-687, Cys-781–Cys-792, Cys-939–Cys-993, and Cys-999–Cys-1004. Asn-784 carries an N-linked (GlcNAc...) asparagine glycan. Residues 952 to 961 (SRDRRRRELG) are compositionally biased toward basic and acidic residues. Residues 952–978 (SRDRRRRELGQPEPQEPPEKVEPSTSW) are disordered. Asn-988 carries an N-linked (GlcNAc...) asparagine glycan. 2 N-linked (GlcNAc...) asparagine glycosylation sites follow: Asn-1023 and Asn-1043. The chain crosses the membrane as a helical span at residues 1077-1102 (GVPWWVILLGVLAGLLVLALLVLLLW). Topologically, residues 1103–1179 (KLGFFKRAKH…PDGHPVPATA (77 aa)) are cytoplasmic. Positions 1105 to 1109 (GFFKR) match the GFFKR motif motif. The segment at 1134-1153 (KEEKTGTIQRSNWGNSQWEG) is disordered. Residues 1139-1152 (GTIQRSNWGNSQWE) show a composition bias toward polar residues. 3 consecutive repeat copies span residues 1155–1158 (DAHP), 1163–1166 (DWHP), and 1171–1174 (DGHP). The 3 X 4 AA repeats of D-X-H-P stretch occupies residues 1155-1174 (DAHPILAADWHPELGPDGHP).

This sequence belongs to the integrin alpha chain family. In terms of assembly, heterodimer of an alpha and a beta subunit. The alpha subunit is composed of a heavy and a light chain linked by a disulfide bond. Alpha-7 associates with beta-1. Interacts with COMP. Interacts (via C-terminus intracellular tail region) with CIB1; the interaction is stabilized/increased in a calcium- and magnesium-dependent manner. ADP-ribosylated on at least two sites of the extracellular domain in skeletal myotubes (in vitro). Post-translationally, no proteolytic cleavage to produce the 70 kDa form is seen due to the presence of a Gly instead of an arginine residue at position 647. As to expression, isoforms containing segment X2 are found in adult heart, lung and skeletal muscle. Isoforms containing segment X1 are expressed in adult heart, lung and in proliferating skeletal myoblasts but not in adult skeletal muscle. Isoforms containing segment a are exclusively found in skeletal muscle. Isoforms containing segment B are widely expressed. In muscle fibers isoforms containing segment A and B are expressed at myotendinous and neuromuscular junctions; isoforms containing segment C are expressed at neuromuscular junctions and at extrasynaptic sites.

It is found in the membrane. In terms of biological role, integrin alpha-7/beta-1 is the primary laminin receptor on skeletal myoblasts and adult myofibers. During myogenic differentiation, it may induce changes in the shape and mobility of myoblasts, and facilitate their localization at laminin-rich sites of secondary fiber formation. Involved in the maintenance of the myofibers cytoarchitecture as well as for their anchorage, viability and functional integrity. Mice carrying a ITGA7 null allele are viable and fertile, but show progressive muscular dystrophy starting soon after birth, but with a distinct variability in different muscle types. Required to promote contractile phenotype acquisition in differentiated airway smooth muscle (ASM) cells. Acts as a Schwann cell receptor for laminin-2. Acts as a receptor of COMP and mediates its effect on vascular smooth muscle cells (VSMCs) maturation. The sequence is that of Integrin alpha-7 (Itga7) from Mus musculus (Mouse).